Here is a 134-residue protein sequence, read N- to C-terminus: Large ribosomal subunit protein eL32 (134 aa).

This sequence belongs to the eukaryotic ribosomal protein eL32 family.

This chain is Large ribosomal subunit protein eL32 (RpL32), found in Drosophila acanthoptera (Fruit fly).